Reading from the N-terminus, the 640-residue chain is Protection of telomeres protein 1 (640 aa).

It belongs to the telombin family. As to quaternary structure, homodimer or homooligomer. Component of the shelterin complex (telosome) composed of TERF1, TERF2, TINF2, TERF2IP, ACD and POT1. Binds single-stranded telomeric DNA as a monomer. Associated component of the telomerase holoenzyme complex. Found in a complex with TERF1, TINF2 and TNKS1. Interacts with TNKS1. Forms heterodimers with ACD. Identified in a complex with ACD and single-stranded telomeric DNA.

It is found in the nucleus. The protein localises to the chromosome. Its subcellular location is the telomere. Functionally, component of the telomerase ribonucleoprotein (RNP) complex that is essential for the replication of chromosome termini. Is a component of the double-stranded telomeric DNA-binding TRF1 complex which is involved in the regulation of telomere length by cis-inhibition of telomerase. Also acts as a single-stranded telomeric DNA-binding protein and thus may act as a downstream effector of the TRF1 complex and may transduce information about telomere maintenance and/or length to the telomere terminus. Component of the shelterin complex (telosome) that is involved in the regulation of telomere length and protection. Shelterin associates with arrays of double-stranded TTAGGG repeats added by telomerase and protects chromosome ends; without its protective activity, telomeres are no longer hidden from the DNA damage surveillance and chromosome ends are inappropriately processed by DNA repair pathways. Binds to two or more telomeric single-stranded 5'-TTAGGG-3' repeats (G-strand) and with high specificity to a minimal telomeric single-stranded 5'-TAGGGTTAG-3' sequence. Binds telomeric single-stranded sequences internally or at proximity of a 3'-end. Its activity is TERT dependent but it does not increase TERT activity. This is Protection of telomeres protein 1 (Pot1) from Mus musculus (Mouse).